An 804-amino-acid chain; its full sequence is Leucine--tRNA ligase (804 aa).

Positions 40 to 51 (PYPSGQGLHVGH) match the 'HIGH' region motif. Positions 576–580 (KMSKS) match the 'KMSKS' region motif. K579 contributes to the ATP binding site.

Belongs to the class-I aminoacyl-tRNA synthetase family.

Its subcellular location is the cytoplasm. It carries out the reaction tRNA(Leu) + L-leucine + ATP = L-leucyl-tRNA(Leu) + AMP + diphosphate. The polypeptide is Leucine--tRNA ligase (Enterococcus faecalis (strain ATCC 700802 / V583)).